Consider the following 76-residue polypeptide: Acyl carrier protein (76 aa).

A Carrier domain is found at 1 to 75 (MVLEKIKTLM…DVVLYIEKNL (75 aa)). Serine 35 bears the O-(pantetheine 4'-phosphoryl)serine mark.

It belongs to the acyl carrier protein (ACP) family. 4'-phosphopantetheine is transferred from CoA to a specific serine of apo-ACP by AcpS. This modification is essential for activity because fatty acids are bound in thioester linkage to the sulfhydryl of the prosthetic group.

The protein localises to the cytoplasm. It participates in lipid metabolism; fatty acid biosynthesis. In terms of biological role, carrier of the growing fatty acid chain in fatty acid biosynthesis. This chain is Acyl carrier protein, found in Phytoplasma australiense.